The chain runs to 272 residues: Interleukin-2 receptor subunit alpha (272 aa).

The N-terminal stretch at 1–21 (MDPYLLMWGLLTFITVPGCQA) is a signal peptide. The Sushi 1 domain occupies 22 to 84 (ELCDDDPPKI…SWDNQCQCTS (63 aa)). Residues 22–240 (ELCDDDPPKI…ETFIFTTEYQ (219 aa)) are Extracellular-facing. Cystine bridges form between Cys24–Cys67, Cys49–Cys80, and Cys51–Cys82. 2 N-linked (GlcNAc...) asparagine glycosylation sites follow: Asn70 and Asn89. Over residues 87–98 (ARNTTKQVTPQP) the composition is skewed to polar residues. The interval 87–109 (ARNTTKQVTPQPEEQKERKTTEM) is disordered. Residues 123-186 (GHCREPPPWE…WTQPQLICTG (64 aa)) enclose the Sushi 2 domain. 2 cysteine pairs are disulfide-bonded: Cys125-Cys168 and Cys152-Cys184. Residues 186 to 213 (GETEPSQFPGEEEPQASPDGLPESETSR) are disordered. Residues 241–259 (VAVAGCVFLLISVLLLSGL) form a helical membrane-spanning segment. The Cytoplasmic segment spans residues 260-272 (TWQRRQRKNRRTI).

In terms of assembly, non-covalent dimer of an alpha and a beta subunit. IL2R exists in 3 different forms: a high affinity dimer, an intermediate affinity monomer (beta subunit), and a low affinity monomer (alpha subunit). The high and intermediate affinity forms also associate with a gamma subunit.

The protein localises to the membrane. Its function is as follows. Receptor for interleukin-2. The receptor is involved in the regulation of immune tolerance by controlling regulatory T cells (TREGs) activity. TREGs suppress the activation and expansion of autoreactive T-cells. This Macaca mulatta (Rhesus macaque) protein is Interleukin-2 receptor subunit alpha (IL2RA).